The following is a 192-amino-acid chain: Cytochrome b-245 light chain (192 aa).

Topologically, residues 2–7 are cytoplasmic; that stretch reads GQIEWA. Residues 8 to 30 traverse the membrane as a helical segment; the sequence is MWANEQALASGLILITGGIVATA. Topologically, residues 31–35 are extracellular; the sequence is GRFTQ. The helical transmembrane segment at 36–53 threads the bilayer; the sequence is WYFGAYSIVAGVLICLLE. The Cytoplasmic segment spans residues 54–69; sequence YPRGKRKKGSTMERCG. The stretch at 70 to 80 is an intramembrane region; the sequence is QKYLTAVVKLF. The Cytoplasmic portion of the chain corresponds to 81-86; the sequence is GPLTRN. The chain crosses the membrane as a helical span at residues 87–104; that stretch reads YYVRAVLHLLLSVPAGFL. Residue Leu105 is a topological domain, extracellular. Residues 106 to 126 traverse the membrane as a helical segment; it reads ATILGTVCLAIASVIYLLAAI. Topologically, residues 127 to 192 are cytoplasmic; sequence RGEQWTPIEP…NPIPVTDEVV (66 aa). The segment at 134 to 192 is disordered; it reads IEPKPKERPQVGGTIKQPPTNPPPRPPAEVRKKPSEAEEEAASAGGPQVNPIPVTDEVV. Phosphothreonine is present on Thr147. Residue Lys149 forms a Glycyl lysine isopeptide (Lys-Gly) (interchain with G-Cter in ubiquitin) linkage. A phosphoserine mark is found at Ser168 and Ser176.

The protein belongs to the p22phox family. Component of the phagocyte NADPH oxidase core complex/cytochrome b558 complex, composed of CYBB (heavy chain (beta)) and CYBA (light chain (alpha)). Component of the phagocyte NADPH oxidase complex composed of an obligatory core heterodimer formed by the membrane proteins CYBA and CYBB and the cytosolic regulatory subunits NCF1/p47-phox, NCF2/p67-phox, NCF4/p40-phox and the small GTPase RAC1 or RAC2. Interacts with NCF1 (via SH3 domain). Interacts with SH3PXD2A. Interacts with DUOX1, DUOX2 and TPO. Interacts with NOX4; this interaction mediates superoxide generation. Interacts with calprotectin (S100A8/9). Interacts with GBP7. Interacts with NOXO1. Forms a heterodimer with NOX3 and is essential for activity and cell membrane localization of NOX3. Interacts with NOX1. Post-translationally, phosphorylation at Thr-147 enhances NADPH oxidase activity by promoting NCF1/p47-phox binding. Ubiquitinated at Lys-149 likely by RNF145. In terms of tissue distribution, expressed to a relatively high level in kidney, spleen, thymus and lung, and to a lower level in aorta, adrenals, and heart. Expression is not detected in liver or brain.

The protein resides in the cell membrane. In terms of biological role, subunit of NADPH oxidase complexes that is required for the NADPH oxidase activity that generates, in various cell types, superoxide from molecular oxygen utilizing NADPH as an electron donor. Subunit of the phagocyte NADPH oxidase complex that mediates the transfer of electrons from cytosolic NADPH to O2 to produce the superoxide anion (O2(-)). In the activated complex, electrons are first transferred from NADPH to flavin adenine dinucleotide (FAD) and subsequently transferred via two heme molecules to molecular oxygen, producing superoxide through an outer-sphere reaction. Activation of the NADPH oxidase complex is initiated by the assembly of cytosolic subunits of the NADPH oxidase complex with the core NADPH oxidase complex to form a complex at the plasma membrane or phagosomal membrane. This activation process is initiated by phosphorylation dependent binding of the cytosolic NCF1/p47-phox subunit to the C-terminus of CYBA/p22-phox. Aassociates with NOX3 to form a functional NADPH oxidase constitutively generating superoxide. The polypeptide is Cytochrome b-245 light chain (Rattus norvegicus (Rat)).